Reading from the N-terminus, the 525-residue chain is DNA damage-binding protein cmr1 (525 aa).

Over residues 34-50 the composition is skewed to polar residues; that stretch reads TGVFTSNMPRGTSANQS. Disordered regions lie at residues 34–103, 214–240, and 282–301; these read TGVF…ERAK, DASQEKPTSAVKNEDDEDDEDDDDPDP, and TSSVEKYAPESTSDDVPISG. Residues 83 to 102 show a composition bias toward basic and acidic residues; the sequence is EIAKRKADEEYDRRQEEERA. The stretch at 182-223 is one WD 1 repeat; the sequence is ITPERIYSMTFHPSEAKPVIFAGDKMGHLGILDASQEKPTSA. Residues 227 to 239 are compositionally biased toward acidic residues; the sequence is EDDEDDEDDDDPD. WD repeat units lie at residues 247–287, 339–379, 384–425, 448–491, and 494–525; these read PHTR…SVEK, LSEK…HTDP, EHQS…SSWK, GRWV…LAQL, and DGITAVPAVAVFHRSKNWVAGGTASGKICLWM.

The protein belongs to the WD repeat DDB2/WDR76 family.

DNA-binding protein that binds to both single- and double-stranded DNA. Binds preferentially to UV-damaged DNA. May be involved in DNA-metabolic processes. This is DNA damage-binding protein cmr1 from Emericella nidulans (strain FGSC A4 / ATCC 38163 / CBS 112.46 / NRRL 194 / M139) (Aspergillus nidulans).